Reading from the N-terminus, the 221-residue chain is Germin-like protein subfamily 1 member 17 (221 aa).

Residues 1–21 form the signal peptide; it reads MKVSMSLILITLSALVTIAKA. A disulfide bridge links Cys31 with Cys48. Residues 76–213 enclose the Cupin type-1 domain; the sequence is SNVTTVNVDQ…AFQLDVNVVK (138 aa). The N-linked (GlcNAc...) asparagine glycan is linked to Asn77. Mn(2+) is bound by residues His110, His112, Glu117, and His159.

It belongs to the germin family. As to quaternary structure, oligomer (believed to be a pentamer but probably hexamer).

It localises to the secreted. Its subcellular location is the extracellular space. It is found in the apoplast. May play a role in plant defense. Probably has no oxalate oxidase activity even if the active site is conserved. This chain is Germin-like protein subfamily 1 member 17, found in Arabidopsis thaliana (Mouse-ear cress).